The primary structure comprises 430 residues: Phosphomethylpyrimidine synthase 2 (430 aa).

Substrate is bound by residues Asn66, Met95, Tyr124, His164, 186 to 188, 227 to 230, and Glu266; these read SRG and DGFR. His270 is a binding site for Zn(2+). Tyr293 serves as a coordination point for substrate. Zn(2+) is bound at residue His334. Cys411, Cys414, and Cys418 together coordinate [4Fe-4S] cluster.

This sequence belongs to the ThiC family. Homodimer. The cofactor is [4Fe-4S] cluster.

It catalyses the reaction 5-amino-1-(5-phospho-beta-D-ribosyl)imidazole + S-adenosyl-L-methionine = 4-amino-2-methyl-5-(phosphooxymethyl)pyrimidine + CO + 5'-deoxyadenosine + formate + L-methionine + 3 H(+). It functions in the pathway cofactor biosynthesis; thiamine diphosphate biosynthesis. Its function is as follows. Catalyzes the synthesis of the hydroxymethylpyrimidine phosphate (HMP-P) moiety of thiamine from aminoimidazole ribotide (AIR) in a radical S-adenosyl-L-methionine (SAM)-dependent reaction. In Syntrophotalea carbinolica (strain DSM 2380 / NBRC 103641 / GraBd1) (Pelobacter carbinolicus), this protein is Phosphomethylpyrimidine synthase 2.